The sequence spans 152 residues: Fibroblast growth factor 1 (152 aa).

Position 2 is an N-acetylalanine (alanine 2). Residues 2–15 constitute a propeptide that is removed on maturation; it reads AEGEITTFTALTEK. A heparin-binding site is contributed by asparagine 33. The heparin-binding stretch occupies residues 127-143; sequence KKNGSCKRGPRTHYGQK.

The protein belongs to the heparin-binding growth factors family. As to quaternary structure, monomer. Homodimer. Interacts with FGFR1, FGFR2, FGFR3 and FGFR4. Affinity between fibroblast growth factors (FGFs) and their receptors is increased by heparan sulfate glycosaminoglycans that function as coreceptors. Found in a complex with FGFBP1, FGF1 and FGF2. Interacts with FGFBP1. Part of a Cu(2+)-dependent multiprotein aggregate containing FGF1, S100A13 and SYT1. Interacts with SYT1. Interacts with S100A13. Interacts with LRRC59. Interacts with CSNKA, CSNKB and FIBP. While binding with LRRC59, CSNKA and FIBP seem mutually exclusive, CSNKB and FIBP may cooperatively interact with FGF1. Forms a ternary complex with FGFR1 and ITGAV:ITGB3 and induces the recruitment of PTPN11 to the complex. In terms of processing, in the nucleus, phosphorylated by PKC/PRKCD.

It localises to the secreted. Its subcellular location is the cytoplasm. The protein localises to the cell cortex. It is found in the cytosol. The protein resides in the nucleus. Its function is as follows. Plays an important role in the regulation of cell survival, cell division, angiogenesis, cell differentiation and cell migration. Functions as a potent mitogen in vitro. Acts as a ligand for FGFR1 and integrins. Binds to FGFR1 in the presence of heparin leading to FGFR1 dimerization and activation via sequential autophosphorylation on tyrosine residues which act as docking sites for interacting proteins, leading to the activation of several signaling cascades. Binds to integrin ITGAV:ITGB3. Its binding to integrin, subsequent ternary complex formation with integrin and FGFR1, and the recruitment of PTPN11 to the complex are essential for FGF1 signaling. Induces the phosphorylation and activation of FGFR1, FRS2, MAPK3/ERK1, MAPK1/ERK2 and AKT1. Can induce angiogenesis. In Sus scrofa (Pig), this protein is Fibroblast growth factor 1 (FGF1).